The following is a 312-amino-acid chain: Porphobilinogen deaminase (312 aa).

S-(dipyrrolylmethanemethyl)cysteine is present on Cys-241.

It belongs to the HMBS family. As to quaternary structure, monomer. Dipyrromethane serves as cofactor.

It catalyses the reaction 4 porphobilinogen + H2O = hydroxymethylbilane + 4 NH4(+). Its pathway is porphyrin-containing compound metabolism; protoporphyrin-IX biosynthesis; coproporphyrinogen-III from 5-aminolevulinate: step 2/4. Functionally, tetrapolymerization of the monopyrrole PBG into the hydroxymethylbilane pre-uroporphyrinogen in several discrete steps. The polypeptide is Porphobilinogen deaminase (Cytophaga hutchinsonii (strain ATCC 33406 / DSM 1761 / CIP 103989 / NBRC 15051 / NCIMB 9469 / D465)).